We begin with the raw amino-acid sequence, 354 residues long: Ferredoxin--NADP reductase (354 aa).

Residues aspartate 39, glutamine 47, tyrosine 52, valine 92, phenylalanine 127, aspartate 296, and threonine 337 each contribute to the FAD site.

The protein belongs to the ferredoxin--NADP reductase type 2 family. Homodimer. Requires FAD as cofactor.

The catalysed reaction is 2 reduced [2Fe-2S]-[ferredoxin] + NADP(+) + H(+) = 2 oxidized [2Fe-2S]-[ferredoxin] + NADPH. The sequence is that of Ferredoxin--NADP reductase from Albidiferax ferrireducens (strain ATCC BAA-621 / DSM 15236 / T118) (Rhodoferax ferrireducens).